We begin with the raw amino-acid sequence, 141 residues long: MLLGTFNLTLDNKNRISLPAKLRSFFDSSIVINRGFENCLEIRKPADFESYFQTFNNFPNTQKDTRTLKRLIFANANLVELDSANRILIPNNLISDAKLDKEIVLIGQFDHLEVWDKVQYEQYLASSESLETVAERMKDAK.

2 consecutive SpoVT-AbrB domains span residues T5–D47 and A76–Q119.

This sequence belongs to the MraZ family. As to quaternary structure, forms oligomers.

The protein resides in the cytoplasm. The protein localises to the nucleoid. The polypeptide is Transcriptional regulator MraZ (Mycoplasma genitalium (strain ATCC 33530 / DSM 19775 / NCTC 10195 / G37) (Mycoplasmoides genitalium)).